A 359-amino-acid chain; its full sequence is Histidinol-phosphate aminotransferase (359 aa).

Lysine 217 bears the N6-(pyridoxal phosphate)lysine mark.

Belongs to the class-II pyridoxal-phosphate-dependent aminotransferase family. Histidinol-phosphate aminotransferase subfamily. In terms of assembly, homodimer. The cofactor is pyridoxal 5'-phosphate.

The catalysed reaction is L-histidinol phosphate + 2-oxoglutarate = 3-(imidazol-4-yl)-2-oxopropyl phosphate + L-glutamate. It functions in the pathway amino-acid biosynthesis; L-histidine biosynthesis; L-histidine from 5-phospho-alpha-D-ribose 1-diphosphate: step 7/9. The chain is Histidinol-phosphate aminotransferase from Salmonella paratyphi A (strain ATCC 9150 / SARB42).